The sequence spans 93 residues: Small ribosomal subunit protein uS19 (93 aa).

Belongs to the universal ribosomal protein uS19 family.

Protein S19 forms a complex with S13 that binds strongly to the 16S ribosomal RNA. The protein is Small ribosomal subunit protein uS19 of Nitratidesulfovibrio vulgaris (strain ATCC 29579 / DSM 644 / CCUG 34227 / NCIMB 8303 / VKM B-1760 / Hildenborough) (Desulfovibrio vulgaris).